The following is a 140-amino-acid chain: Nucleoside diphosphate kinase (140 aa).

Residues Lys-11, Phe-59, Arg-87, Thr-93, Arg-104, and Asn-114 each contribute to the ATP site. His-117 (pros-phosphohistidine intermediate) is an active-site residue.

Belongs to the NDK family. As to quaternary structure, homotetramer. It depends on Mg(2+) as a cofactor.

It is found in the cytoplasm. It carries out the reaction a 2'-deoxyribonucleoside 5'-diphosphate + ATP = a 2'-deoxyribonucleoside 5'-triphosphate + ADP. It catalyses the reaction a ribonucleoside 5'-diphosphate + ATP = a ribonucleoside 5'-triphosphate + ADP. Functionally, major role in the synthesis of nucleoside triphosphates other than ATP. The ATP gamma phosphate is transferred to the NDP beta phosphate via a ping-pong mechanism, using a phosphorylated active-site intermediate. In Rickettsia conorii (strain ATCC VR-613 / Malish 7), this protein is Nucleoside diphosphate kinase.